The primary structure comprises 457 residues: MANNYQTLYDSAIKRIPYDLISDQAYAILQNAKTHKVCDGVLYIIVANAFEKSIINGNFINIISKYLSEEFKKENIVNFEFIIDNEKLLINSNFLIKETNIKNRFNFSDELLRYNFNNLVISNFNQKAIKAIENLFSNNYDNSSMCNPLFLFGKVGVGKTHIVAAAGNRFANSNPNLKIYYYEGQDFFRKFCSASLKGTSYVEEFKKEIASADLLIFEDIQNIQSRDSTAELFFNIFNDIKLNGGKIILTSDRTPNELNGFHNRIISRLASGLQCKISQPDKNEAIKIINNWFEFKKKYQITDEAKEYIAEGFHTDIRQMIGNLKQICFWADNDTNKDLIITKDYVIECSVENEIPLNIVVKKQFKPEQIIEIVAKELNIKTDLIKSSIRKNNIVWARDIVCYILKNKLNLTLTDIGKLLNGREHTTISHSISKVQKILDDENSQEALQINLIINKF.

Residues 1 to 73 form a domain I, interacts with DnaA modulators region; it reads MANNYQTLYD…SKYLSEEFKK (73 aa). Positions 73 to 108 are domain II; the sequence is KENIVNFEFIIDNEKLLINSNFLIKETNIKNRFNFS. A domain III, AAA+ region region spans residues 109 to 331; the sequence is DELLRYNFNN…GNLKQICFWA (223 aa). Residues Gly156, Gly158, Lys159, and Thr160 each coordinate ATP. The domain IV, binds dsDNA stretch occupies residues 332 to 457; that stretch reads DNDTNKDLII…LQINLIINKF (126 aa).

This sequence belongs to the DnaA family. Oligomerizes as a right-handed, spiral filament on DNA at oriC.

Its subcellular location is the cytoplasm. Plays an essential role in the initiation and regulation of chromosomal replication. ATP-DnaA binds to the origin of replication (oriC) to initiate formation of the DNA replication initiation complex once per cell cycle. Binds the DnaA box (a 9 base pair repeat at the origin) and separates the double-stranded (ds)DNA. Forms a right-handed helical filament on oriC DNA; dsDNA binds to the exterior of the filament while single-stranded (ss)DNA is stabiized in the filament's interior. The ATP-DnaA-oriC complex binds and stabilizes one strand of the AT-rich DNA unwinding element (DUE), permitting loading of DNA polymerase. After initiation quickly degrades to an ADP-DnaA complex that is not apt for DNA replication. Binds acidic phospholipids. In Ureaplasma parvum serovar 3 (strain ATCC 700970), this protein is Chromosomal replication initiator protein DnaA.